Here is a 112-residue protein sequence, read N- to C-terminus: MSDTAVDASVEKSTKDLKAKEKEVVEEAENGKDKPTNGNAENEENGEQEGDNEVDEEEEVDEEDEEDDVEGDDDEVDDDDEVEGATGKRAAEDDEDDDDDVETKKQKTDEDD.

The tract at residues methionine 1–aspartate 112 is disordered. The segment covering serine 9–proline 35 has biased composition (basic and acidic residues). Composition is skewed to acidic residues over residues glutamate 41–glutamate 83 and glutamate 92–valine 101. A compositionally biased stretch (basic and acidic residues) spans glutamate 102 to aspartate 112.

The protein belongs to the pro/parathymosin family.

The protein localises to the nucleus. The chain is Prothymosin alpha-B (ptma-b) from Xenopus laevis (African clawed frog).